Reading from the N-terminus, the 151-residue chain is Deoxyuridine 5'-triphosphate nucleotidohydrolase (151 aa).

Residues 70–72 (RSG), Asn-83, 87–89 (LID), and Met-97 each bind substrate.

This sequence belongs to the dUTPase family. Requires Mg(2+) as cofactor.

It carries out the reaction dUTP + H2O = dUMP + diphosphate + H(+). It functions in the pathway pyrimidine metabolism; dUMP biosynthesis; dUMP from dCTP (dUTP route): step 2/2. This enzyme is involved in nucleotide metabolism: it produces dUMP, the immediate precursor of thymidine nucleotides and it decreases the intracellular concentration of dUTP so that uracil cannot be incorporated into DNA. The protein is Deoxyuridine 5'-triphosphate nucleotidohydrolase of Haemophilus influenzae (strain 86-028NP).